A 772-amino-acid polypeptide reads, in one-letter code: MFANSARNALKKRPQNLQPFRFQGCLFSKRANRPLTTKVQHLIYASVDDKALVTLFDQPRSTLRSPFATTGLFGHPSLTHPRALISLADATVVRAQLLTDRILRARESRTELLRVVKNLDRLSDMLCGVIDLAELVRNAHPDRSWVDAANRAYETLCEFMNVLNTHVGLYEVLKAVLSDPSIVKTLGPEAHQTALIFWRDFEKSAIDLPAEQRKKFVSLSSDILVLGRQFLEGANAPRPPASIKPSQLSGLKDKGMGVRLQLQAQFTQRDLQVYPGSLQAQMIMRSAPEEEPRRQVYLAANSSTPQQIEVLEKLLRTRAELARLVGRDSFAHMTLDDKMAKTPDNVWNFLDALMDHTKPFARRALHTLSERKQLHHGTSSLPIIQAWDRDFYCPPDPPAPPIPLPPLTLGTVFMGLSRLFQHMYGISLRPADSASGEVWHTDVQKLEVVDQDQGIIGWIYADLFARRGKASGAAHYTVRCSRRTDDDDESSDGTVEGAELLIYESQEFEAVKRHRLPNQDGIYQLPLVVLLCEFARPTPSKGPTVLEWHEVLTLFHEMGHAMHSMIGRTEYQNVAGTRCATDFVEFPSILMEHFLNSPTVLSLFDVDGTSTVRHIGNHHNDPCHFIDTYSQILLAAVDQVYHSPAVLDPTFDSTAELAKVHNTRGLIPYVPGTSFQTQFGHLYGYGATYYSYLLDRAIASRVWRNVFLDDPLDRETGEKFKCEVLRFGGGKDPWKMVSALLDVPELSTGDAEAMREIGRWKINSEIGVHGRH.

The N-terminal 42 residues, 1-42 (MFANSARNALKKRPQNLQPFRFQGCLFSKRANRPLTTKVQHL), are a transit peptide targeting the mitochondrion. Position 556 (His-556) interacts with Zn(2+). Residue Glu-557 is part of the active site. Zn(2+) is bound by residues His-560 and His-563.

Belongs to the peptidase M3 family. The cofactor is Zn(2+).

Its subcellular location is the mitochondrion matrix. The catalysed reaction is Release of an N-terminal octapeptide as second stage of processing of some proteins imported into the mitochondrion.. Its function is as follows. Cleaves proteins, imported into the mitochondrion, to their mature size. While most mitochondrial precursor proteins are processed to the mature form in one step by mitochondrial processing peptidase (MPP), the sequential cleavage by MIP of an octapeptide after initial processing by MPP is a required step for a subgroup of nuclear-encoded precursor proteins destined for the matrix or the inner membrane. This Laccaria bicolor (strain S238N-H82 / ATCC MYA-4686) (Bicoloured deceiver) protein is Mitochondrial intermediate peptidase (OCT1).